Here is a 157-residue protein sequence, read N- to C-terminus: SsrA-binding protein (157 aa).

Belongs to the SmpB family.

It localises to the cytoplasm. Required for rescue of stalled ribosomes mediated by trans-translation. Binds to transfer-messenger RNA (tmRNA), required for stable association of tmRNA with ribosomes. tmRNA and SmpB together mimic tRNA shape, replacing the anticodon stem-loop with SmpB. tmRNA is encoded by the ssrA gene; the 2 termini fold to resemble tRNA(Ala) and it encodes a 'tag peptide', a short internal open reading frame. During trans-translation Ala-aminoacylated tmRNA acts like a tRNA, entering the A-site of stalled ribosomes, displacing the stalled mRNA. The ribosome then switches to translate the ORF on the tmRNA; the nascent peptide is terminated with the 'tag peptide' encoded by the tmRNA and targeted for degradation. The ribosome is freed to recommence translation, which seems to be the essential function of trans-translation. In Limosilactobacillus reuteri (strain DSM 20016) (Lactobacillus reuteri), this protein is SsrA-binding protein.